The primary structure comprises 105 residues: Iron-sulfur cluster assembly protein CyaY (105 aa).

Belongs to the frataxin family.

Functionally, involved in iron-sulfur (Fe-S) cluster assembly. May act as a regulator of Fe-S biogenesis. This is Iron-sulfur cluster assembly protein CyaY from Dechloromonas aromatica (strain RCB).